The following is a 371-amino-acid chain: Cytochrome b (371 aa).

The next 4 helical transmembrane spans lie at 25-45 (FGSMLLTCLILQITTGFFLAI), 69-90 (WIMQNLHAIGASMFFICIYIHI), 105-125 (WLSGTTLLITLMATAFFGYVL), and 170-190 (FFALHFILPFAIISLSSIHII). The heme b site is built by His-75 and His-89. Residues His-174 and His-188 each contribute to the heme b site. His-193 contributes to the a ubiquinone binding site. Helical transmembrane passes span 218-238 (YKDTLMTISLFILMFTILSFS), 280-300 (LGGTLALLMSVTILMTAPFTH), 312-332 (LAQMAFWTLIATFITITWTAS), and 339-358 (FIIISQMTSILYFLFFIMNP).

Belongs to the cytochrome b family. The cytochrome bc1 complex contains 3 respiratory subunits (MT-CYB, CYC1 and UQCRFS1), 2 core proteins (UQCRC1 and UQCRC2) and probably 6 low-molecular weight proteins. The cofactor is heme b.

It localises to the mitochondrion inner membrane. Component of the ubiquinol-cytochrome c reductase complex (complex III or cytochrome b-c1 complex) that is part of the mitochondrial respiratory chain. The b-c1 complex mediates electron transfer from ubiquinol to cytochrome c. Contributes to the generation of a proton gradient across the mitochondrial membrane that is then used for ATP synthesis. In Sinomicrurus kelloggi (Kellogg's coral snake), this protein is Cytochrome b (MT-CYB).